The primary structure comprises 157 residues: MTAASSSAPTLGIIRLEHAKGLDLPAYETAGSAGMDLRAAVAEDRQIVLLPGRRTLVPTGLILEIPQGYEVQIRPRSGLAFKNGITCLNTPGTIDSDYRGEVKVLLINLGDDDFRIERGMRIAQAVFAPVIQPKIEERAKISETARGAGGFGSTGTA.

Residues 76–78 (RSG), N89, 93–95 (TID), and K103 contribute to the substrate site.

Belongs to the dUTPase family. Requires Mg(2+) as cofactor.

The enzyme catalyses dUTP + H2O = dUMP + diphosphate + H(+). Its pathway is pyrimidine metabolism; dUMP biosynthesis; dUMP from dCTP (dUTP route): step 2/2. This enzyme is involved in nucleotide metabolism: it produces dUMP, the immediate precursor of thymidine nucleotides and it decreases the intracellular concentration of dUTP so that uracil cannot be incorporated into DNA. This is Deoxyuridine 5'-triphosphate nucleotidohydrolase from Brucella abortus (strain 2308).